The following is a 115-amino-acid chain: Large ribosomal subunit protein uL22 (115 aa).

The protein belongs to the universal ribosomal protein uL22 family. As to quaternary structure, part of the 50S ribosomal subunit.

In terms of biological role, this protein binds specifically to 23S rRNA; its binding is stimulated by other ribosomal proteins, e.g. L4, L17, and L20. It is important during the early stages of 50S assembly. It makes multiple contacts with different domains of the 23S rRNA in the assembled 50S subunit and ribosome. Functionally, the globular domain of the protein is located near the polypeptide exit tunnel on the outside of the subunit, while an extended beta-hairpin is found that lines the wall of the exit tunnel in the center of the 70S ribosome. The polypeptide is Large ribosomal subunit protein uL22 (Ligilactobacillus salivarius (strain UCC118) (Lactobacillus salivarius)).